A 227-amino-acid chain; its full sequence is Putative ankyrin repeat protein L45 (227 aa).

ANK repeat units lie at residues 38–66 (FETNIIEYVVENNLLDILRHIIFLKNINH), 78–107 (CLEESLNASCKNGKLEIVKLLVDLGANIFH), 108–137 (NENCAMMLASEYGHIEIVEYLVSKGSDVRA), 139–167 (NDYAVIYASKNGHLEIVKYLVSQGCDVRS), 168–197 (CDSYAVRLASEYGHLEIVKFLVKKGANYRA), and 199–227 (NHHAVIEASKNKHYEIVEFLMNYSTGITK).

This Acanthamoeba polyphaga mimivirus (APMV) protein is Putative ankyrin repeat protein L45.